The following is a 232-amino-acid chain: Fibrillarin-like rRNA/tRNA 2'-O-methyltransferase (232 aa).

Residues 89 to 90 (TT), 108 to 109 (EF), 133 to 134 (DA), and 153 to 156 (DIAQ) each bind S-adenosyl-L-methionine.

The protein belongs to the methyltransferase superfamily. Fibrillarin family. In terms of assembly, interacts with nop5. Component of box C/D small ribonucleoprotein (sRNP) particles that contain rpl7ae, FlpA and nop5, plus a guide RNA. These sRNP particles form homodimers, giving rise to an asymmetric holoenzyme.

Involved in pre-rRNA and tRNA processing. Utilizes the methyl donor S-adenosyl-L-methionine to catalyze the site-specific 2'-hydroxyl methylation of ribose moieties in rRNA and tRNA. Site specificity is provided by a guide RNA that base pairs with the substrate. Methylation occurs at a characteristic distance from the sequence involved in base pairing with the guide RNA. In Saccharolobus solfataricus (strain ATCC 35092 / DSM 1617 / JCM 11322 / P2) (Sulfolobus solfataricus), this protein is Fibrillarin-like rRNA/tRNA 2'-O-methyltransferase.